A 425-amino-acid chain; its full sequence is Histidine--tRNA ligase (425 aa).

This sequence belongs to the class-II aminoacyl-tRNA synthetase family. Homodimer.

The protein resides in the cytoplasm. It catalyses the reaction tRNA(His) + L-histidine + ATP = L-histidyl-tRNA(His) + AMP + diphosphate + H(+). The protein is Histidine--tRNA ligase of Streptococcus uberis (strain ATCC BAA-854 / 0140J).